A 136-amino-acid polypeptide reads, in one-letter code: Cyclase aurE (136 aa).

Belongs to the aurE cyclase family.

Its pathway is polyketide biosynthesis. In terms of biological role, cyclase; part of the gene cluster that mediates the biosynthesis of aurovertins, fungal polyketides that exhibit potent inhibition of adenosine triphosphate synthase. Tha biosynthesis starts with the HR-PKS aurA that selects propionate as the starter unit; synthesizes a hexa-ene chain through the repeated functions of the KR and DH domains in the first six iterations; selectively introduces three alpha-methyl substitutions at C4, C6, and C16 using the S-adensylmethionine-dependent cMET; and shuts off KR and DH in the last three iterations to afford a 1,3,5-triketo portion that can undergo intramolecular cyclization to yield the alpha-pyrone intermediate. AurE may act as a cyclase and enhances the rate of pyrone formation and product release of aurA. The methyltransferase aurB then methylates the C17 hydroxyl group. C17 methylation is required to initiate epoxidation by the downstream monooxygenase aurC. The monooxygenase aurC and the epoxide hydrolase aurD can iteratively transform the terminal triene portion of the methylated precursor into the dioxabicyclo[3.2.1]octane scaffold of aurovertin E. Epoxidation modifications of the precursor occur in two separate steps; bis-epoxidation of the two terminal olefins takes place first, followed by another epoxidation that occurs at C7-C8 after tetrahydrofuran formation. The O-acyltransferase aurG converts aurovertin E to aurovertin A. This Calcarisporium arbuscula (Dendryphion arbuscula) protein is Cyclase aurE.